The following is a 443-amino-acid chain: 3-isopropylmalate dehydratase large subunit (443 aa).

[4Fe-4S] cluster contacts are provided by cysteine 347, cysteine 407, and cysteine 410.

The protein belongs to the aconitase/IPM isomerase family. LeuC type 1 subfamily. In terms of assembly, heterodimer of LeuC and LeuD. [4Fe-4S] cluster is required as a cofactor.

The enzyme catalyses (2R,3S)-3-isopropylmalate = (2S)-2-isopropylmalate. The protein operates within amino-acid biosynthesis; L-leucine biosynthesis; L-leucine from 3-methyl-2-oxobutanoate: step 2/4. Catalyzes the isomerization between 2-isopropylmalate and 3-isopropylmalate, via the formation of 2-isopropylmaleate. The polypeptide is 3-isopropylmalate dehydratase large subunit (Buchnera aphidicola subsp. Uroleucon sonchi).